A 382-amino-acid polypeptide reads, in one-letter code: 6-hydroxynicotinate 3-monooxygenase (382 aa).

The signal sequence occupies residues 1-25 (MRGRQKIAIVGAGLGGAAAATLLQQ). FAD is bound by residues Gly15, 34–35 (EQ), His47, Arg108, and Leu130. His47 serves as the catalytic Proton acceptor. Tyr215 functions as the Proton acceptor in the catalytic mechanism. Residues Asp294 and 307 to 308 (AC) contribute to the FAD site.

The protein belongs to the 6-hydroxynicotinate 3-monooxygenase family. Monomer. Requires FAD as cofactor.

It carries out the reaction 6-hydroxynicotinate + NADH + O2 + 2 H(+) = 2,5-dihydroxypyridine + CO2 + NAD(+) + H2O. Its pathway is cofactor degradation; nicotinate degradation. Flavin-dependent monooxygenase (FMO) that catalyzes the decarboxylative hydroxylation of 6-hydroxynicotinic acid (6-HNA) to 2,5-dihydroxypyridine (2,5-DHP) with concomitant oxidation of NADH, a step in the aerobic nicotinate degradation pathway. This chain is 6-hydroxynicotinate 3-monooxygenase, found in Pseudomonas putida (strain ATCC 47054 / DSM 6125 / CFBP 8728 / NCIMB 11950 / KT2440).